A 346-amino-acid chain; its full sequence is Uroporphyrinogen decarboxylase (346 aa).

Residues 21-25 (RQAGR), Asp-71, Tyr-146, Ser-201, and His-316 each bind substrate.

The protein belongs to the uroporphyrinogen decarboxylase family. As to quaternary structure, homodimer.

It localises to the cytoplasm. The enzyme catalyses uroporphyrinogen III + 4 H(+) = coproporphyrinogen III + 4 CO2. It functions in the pathway porphyrin-containing compound metabolism; protoporphyrin-IX biosynthesis; coproporphyrinogen-III from 5-aminolevulinate: step 4/4. Its function is as follows. Catalyzes the decarboxylation of four acetate groups of uroporphyrinogen-III to yield coproporphyrinogen-III. The polypeptide is Uroporphyrinogen decarboxylase (Rickettsia africae (strain ESF-5)).